We begin with the raw amino-acid sequence, 193 residues long: dCTP deaminase (193 aa).

DCTP is bound by residues 110–115 (RSSLAR), Asp128, 136–138 (VLE), Tyr171, Lys178, and Gln182. The Proton donor/acceptor role is filled by Glu138. Residues 169–193 (RPYNRRQDAKYKDQQGAVASRIDKD) are disordered.

The protein belongs to the dCTP deaminase family. As to quaternary structure, homotrimer.

The catalysed reaction is dCTP + H2O + H(+) = dUTP + NH4(+). The protein operates within pyrimidine metabolism; dUMP biosynthesis; dUMP from dCTP (dUTP route): step 1/2. In terms of biological role, catalyzes the deamination of dCTP to dUTP. In Pectobacterium atrosepticum (strain SCRI 1043 / ATCC BAA-672) (Erwinia carotovora subsp. atroseptica), this protein is dCTP deaminase.